Consider the following 178-residue polypeptide: uncharacterized protein (178 aa).

Over residues 1–13 the composition is skewed to polar residues; the sequence is MEVASSSSACQFD. Disordered stretches follow at residues 1–24 and 47–114; these read MEVASSSSACQFDNLNNNNNELKP and WPSR…KKEK.

This is an uncharacterized protein from Caenorhabditis elegans.